The sequence spans 297 residues: MSSTQDYIGEEAATRVKILSEALPYIQHFAGRTVVVKYGGAAMKDSNLKDKVIRDIVFMASVGIRPVVVHGGGPEINTWLDKVGIEPQFKDGLRVTDAATMDIVEMVLVGRVNKELVNLINQAGGKAVGLCGKDGQLMTARTMTNKDVGFVGEVSSVDARVVETLVKSGYIPVISSVAADEFGQAHNINADTCAGELAAALGAEKLILLTDTRGILRDYKDPSTLIHKLDIQQARELIGSGIVAGGMIPKVTCCVRSLAQGVRAAHILDGRLPHALLLEVFTDLGIGSMIVASGYDL.

Substrate contacts are provided by residues 72–73 (GG), R94, and N187.

Belongs to the acetylglutamate kinase family. ArgB subfamily.

The protein resides in the cytoplasm. The catalysed reaction is N-acetyl-L-glutamate + ATP = N-acetyl-L-glutamyl 5-phosphate + ADP. Its pathway is amino-acid biosynthesis; L-arginine biosynthesis; N(2)-acetyl-L-ornithine from L-glutamate: step 2/4. Catalyzes the ATP-dependent phosphorylation of N-acetyl-L-glutamate. This chain is Acetylglutamate kinase, found in Synechocystis sp. (strain ATCC 27184 / PCC 6803 / Kazusa).